A 230-amino-acid polypeptide reads, in one-letter code: Urease accessory protein UreF (230 aa).

Belongs to the UreF family. UreD, UreF and UreG form a complex that acts as a GTP-hydrolysis-dependent molecular chaperone, activating the urease apoprotein by helping to assemble the nickel containing metallocenter of UreC. The UreE protein probably delivers the nickel.

It is found in the cytoplasm. In terms of biological role, required for maturation of urease via the functional incorporation of the urease nickel metallocenter. The polypeptide is Urease accessory protein UreF (Marinomonas sp. (strain MWYL1)).